Reading from the N-terminus, the 917-residue chain is Protein translocase subunit SecA (917 aa).

Residues glutamine 87, 105 to 109 (GEGKT), and aspartate 501 contribute to the ATP site. Cysteine 901, cysteine 903, cysteine 912, and histidine 913 together coordinate Zn(2+).

Belongs to the SecA family. Monomer and homodimer. Part of the essential Sec protein translocation apparatus which comprises SecA, SecYEG and auxiliary proteins SecDF-YajC and YidC. Requires Zn(2+) as cofactor.

It localises to the cell inner membrane. It is found in the cytoplasm. The catalysed reaction is ATP + H2O + cellular proteinSide 1 = ADP + phosphate + cellular proteinSide 2.. Its function is as follows. Part of the Sec protein translocase complex. Interacts with the SecYEG preprotein conducting channel. Has a central role in coupling the hydrolysis of ATP to the transfer of proteins into and across the cell membrane, serving both as a receptor for the preprotein-SecB complex and as an ATP-driven molecular motor driving the stepwise translocation of polypeptide chains across the membrane. This Granulibacter bethesdensis (strain ATCC BAA-1260 / CGDNIH1) protein is Protein translocase subunit SecA.